An 856-amino-acid polypeptide reads, in one-letter code: DNA mismatch repair protein MutS (856 aa).

Position 605 to 612 (605 to 612 (GPNMSGKS)) interacts with ATP.

The protein belongs to the DNA mismatch repair MutS family.

Its function is as follows. This protein is involved in the repair of mismatches in DNA. It is possible that it carries out the mismatch recognition step. This protein has a weak ATPase activity. The polypeptide is DNA mismatch repair protein MutS (Lysinibacillus sphaericus (strain C3-41)).